We begin with the raw amino-acid sequence, 118 residues long: UPF0102 protein lpg2994 (118 aa).

Belongs to the UPF0102 family.

The chain is UPF0102 protein lpg2994 from Legionella pneumophila subsp. pneumophila (strain Philadelphia 1 / ATCC 33152 / DSM 7513).